The primary structure comprises 155 residues: Endoribonuclease YbeY (155 aa).

Zn(2+) is bound by residues His110, His114, and His120.

Belongs to the endoribonuclease YbeY family. Zn(2+) is required as a cofactor.

It is found in the cytoplasm. Its function is as follows. Single strand-specific metallo-endoribonuclease involved in late-stage 70S ribosome quality control and in maturation of the 3' terminus of the 16S rRNA. This Deinococcus radiodurans (strain ATCC 13939 / DSM 20539 / JCM 16871 / CCUG 27074 / LMG 4051 / NBRC 15346 / NCIMB 9279 / VKM B-1422 / R1) protein is Endoribonuclease YbeY.